We begin with the raw amino-acid sequence, 278 residues long: Large ribosomal subunit protein uL2 (278 aa).

The tract at residues 222 to 278 (GVVMNPIDHPHGGGEGRTSGGRHPVTPWGKPTKGKKTRSNKSTDKFILISRHKRKKK) is disordered.

The protein belongs to the universal ribosomal protein uL2 family. Part of the 50S ribosomal subunit. Forms a bridge to the 30S subunit in the 70S ribosome.

Functionally, one of the primary rRNA binding proteins. Required for association of the 30S and 50S subunits to form the 70S ribosome, for tRNA binding and peptide bond formation. It has been suggested to have peptidyltransferase activity; this is somewhat controversial. Makes several contacts with the 16S rRNA in the 70S ribosome. The chain is Large ribosomal subunit protein uL2 from Rhodopseudomonas palustris (strain ATCC BAA-98 / CGA009).